A 139-amino-acid chain; its full sequence is Probable trafficking protein particle complex subunit 2 (139 aa).

This sequence belongs to the TRAPP small subunits family. Sedlin subfamily. As to quaternary structure, part of the multisubunit TRAPP (transport protein particle) complex.

It is found in the cytoplasm. Its subcellular location is the perinuclear region. The protein resides in the endoplasmic reticulum. It localises to the golgi apparatus. In terms of biological role, may play a role in vesicular transport from endoplasmic reticulum to Golgi. Involved in dsRNA uptake. The protein is Probable trafficking protein particle complex subunit 2 of Drosophila melanogaster (Fruit fly).